The chain runs to 102 residues: Small ribosomal subunit protein uS10 (102 aa).

It belongs to the universal ribosomal protein uS10 family. Part of the 30S ribosomal subunit.

Functionally, involved in the binding of tRNA to the ribosomes. This chain is Small ribosomal subunit protein uS10, found in Rhizobium meliloti (strain 1021) (Ensifer meliloti).